Consider the following 251-residue polypeptide: 2,3-bisphosphoglycerate-dependent phosphoglycerate mutase (251 aa).

Substrate is bound by residues 11–18 (RHGNSDWN), 24–25 (TG), Arg-63, 90–93 (ERHY), Lys-101, 117–118 (RR), and 185–186 (GN). His-12 functions as the Tele-phosphohistidine intermediate in the catalytic mechanism. Glu-90 serves as the catalytic Proton donor/acceptor.

Belongs to the phosphoglycerate mutase family. BPG-dependent PGAM subfamily.

It catalyses the reaction (2R)-2-phosphoglycerate = (2R)-3-phosphoglycerate. Its pathway is carbohydrate degradation; glycolysis; pyruvate from D-glyceraldehyde 3-phosphate: step 3/5. In terms of biological role, catalyzes the interconversion of 2-phosphoglycerate and 3-phosphoglycerate. In Clavibacter sepedonicus (Clavibacter michiganensis subsp. sepedonicus), this protein is 2,3-bisphosphoglycerate-dependent phosphoglycerate mutase.